The following is a 564-amino-acid chain: Glutamate--tRNA ligase (564 aa).

Positions 107 to 117 (PNPNGPPTLGS) match the 'HIGH' region motif.

The protein belongs to the class-I aminoacyl-tRNA synthetase family. Glutamate--tRNA ligase type 2 subfamily.

Its subcellular location is the cytoplasm. It carries out the reaction tRNA(Glu) + L-glutamate + ATP = L-glutamyl-tRNA(Glu) + AMP + diphosphate. Catalyzes the attachment of glutamate to tRNA(Glu) in a two-step reaction: glutamate is first activated by ATP to form Glu-AMP and then transferred to the acceptor end of tRNA(Glu). The protein is Glutamate--tRNA ligase of Methanothrix thermoacetophila (strain DSM 6194 / JCM 14653 / NBRC 101360 / PT) (Methanosaeta thermophila).